The sequence spans 158 residues: Methylglyoxal synthase (158 aa).

In terms of domain architecture, MGS-like spans 1–158; that stretch reads MRRKLRIALV…AFEESLKVKE (158 aa). Residues H12, K16, 38–41, and 63–64 contribute to the substrate site; these read TGTT and SG. Residue D69 is the Proton donor/acceptor of the active site. Position 96 (H96) interacts with substrate.

The protein belongs to the methylglyoxal synthase family.

It carries out the reaction dihydroxyacetone phosphate = methylglyoxal + phosphate. Its function is as follows. Catalyzes the formation of methylglyoxal from dihydroxyacetone phosphate. This Treponema socranskii protein is Methylglyoxal synthase.